Consider the following 602-residue polypeptide: Protein DGS1, mitochondrial (602 aa).

Transmembrane regions (helical) follow at residues 300 to 320 (LYWV…IWLL) and 465 to 485 (INFA…MLTV).

Component of a mitochondrial large protein complex that contains, at least, MIC60, DGS1, TOM40 (e.g. TOM40-1), TOM20 proteins (e.g. TOM20-2), and petC/RISP.

The protein localises to the mitochondrion outer membrane. Involved in galactoglycerolipid biosynthesis. Contributes to an intracellular signal that regulates an alternative DGD1-independent galactoglycerolipid biosynthesis pathway in chloroplasts. Being involved in mitochondrial lipid homeostasis, modulates mitochondrion biogenesis and physiology, as well as stress responses. The protein is Protein DGS1, mitochondrial of Arabidopsis thaliana (Mouse-ear cress).